Reading from the N-terminus, the 270-residue chain is Phosphatidylinositol transfer protein alpha isoform (270 aa).

Residues threonine 58, lysine 60, glutamate 85, asparagine 89, threonine 96, and lysine 194 each coordinate a 1,2-diacyl-sn-glycero-3-phospho-(1D-myo-inositol). Position 215 is an N6-acetyllysine (lysine 215). The segment covering 250-263 (TKRQLDEMRQKDPV) has biased composition (basic and acidic residues). The tract at residues 250–270 (TKRQLDEMRQKDPVKGMTADD) is disordered.

It belongs to the PtdIns transfer protein family. PI transfer class I subfamily. Phosphorylated by PKC in a calcium and phosphatidylserine-dependent manner.

The protein resides in the cytoplasm. It is found in the nucleus. The catalysed reaction is a 1,2-diacyl-sn-glycero-3-phosphocholine(in) = a 1,2-diacyl-sn-glycero-3-phosphocholine(out). It carries out the reaction a 1,2-diacyl-sn-glycero-3-phospho-(1D-myo-inositol)(in) = a 1,2-diacyl-sn-glycero-3-phospho-(1D-myo-inositol)(out). Its function is as follows. Catalyzes the transfer of phosphatidylinositol (PI) and phosphatidylcholine (PC) between membranes. Shows a preference for PI and PC containing shorter saturated or monosaturated acyl chains at the sn-1 and sn-2 positions. Preference order for PC is C16:1 &gt; C16:0 &gt; C18:1 &gt; C18:0 &gt; C20:4 and for PI is C16:1 &gt; C16:0 &gt; C18:1 &gt; C18:0 &gt; C20:4 &gt; C20:3. This Oryctolagus cuniculus (Rabbit) protein is Phosphatidylinositol transfer protein alpha isoform (PITPNA).